Reading from the N-terminus, the 256-residue chain is Hydroxyacylglutathione hydrolase (256 aa).

Residues histidine 58, histidine 60, aspartate 62, histidine 63, histidine 116, aspartate 135, and histidine 173 each contribute to the Zn(2+) site.

It belongs to the metallo-beta-lactamase superfamily. Glyoxalase II family. Monomer. Zn(2+) serves as cofactor.

The catalysed reaction is an S-(2-hydroxyacyl)glutathione + H2O = a 2-hydroxy carboxylate + glutathione + H(+). It participates in secondary metabolite metabolism; methylglyoxal degradation; (R)-lactate from methylglyoxal: step 2/2. Thiolesterase that catalyzes the hydrolysis of S-D-lactoyl-glutathione to form glutathione and D-lactic acid. In Hyphomonas neptunium (strain ATCC 15444), this protein is Hydroxyacylglutathione hydrolase.